The primary structure comprises 166 residues: Crossover junction endodeoxyribonuclease RuvC (166 aa).

Catalysis depends on residues aspartate 7, glutamate 67, and aspartate 139. Residues aspartate 7, glutamate 67, and aspartate 139 each coordinate Mg(2+).

Belongs to the RuvC family. In terms of assembly, homodimer which binds Holliday junction (HJ) DNA. The HJ becomes 2-fold symmetrical on binding to RuvC with unstacked arms; it has a different conformation from HJ DNA in complex with RuvA. In the full resolvosome a probable DNA-RuvA(4)-RuvB(12)-RuvC(2) complex forms which resolves the HJ. Requires Mg(2+) as cofactor.

The protein resides in the cytoplasm. The enzyme catalyses Endonucleolytic cleavage at a junction such as a reciprocal single-stranded crossover between two homologous DNA duplexes (Holliday junction).. Functionally, the RuvA-RuvB-RuvC complex processes Holliday junction (HJ) DNA during genetic recombination and DNA repair. Endonuclease that resolves HJ intermediates. Cleaves cruciform DNA by making single-stranded nicks across the HJ at symmetrical positions within the homologous arms, yielding a 5'-phosphate and a 3'-hydroxyl group; requires a central core of homology in the junction. The consensus cleavage sequence is 5'-(A/T)TT(C/G)-3'. Cleavage occurs on the 3'-side of the TT dinucleotide at the point of strand exchange. HJ branch migration catalyzed by RuvA-RuvB allows RuvC to scan DNA until it finds its consensus sequence, where it cleaves and resolves the cruciform DNA. This is Crossover junction endodeoxyribonuclease RuvC from Paramagnetospirillum magneticum (strain ATCC 700264 / AMB-1) (Magnetospirillum magneticum).